Reading from the N-terminus, the 104-residue chain is Co-chaperonin GroES 2 (104 aa).

The protein belongs to the GroES chaperonin family. Heptamer of 7 subunits arranged in a ring. Interacts with the chaperonin GroEL.

The protein localises to the cytoplasm. Together with the chaperonin GroEL, plays an essential role in assisting protein folding. The GroEL-GroES system forms a nano-cage that allows encapsulation of the non-native substrate proteins and provides a physical environment optimized to promote and accelerate protein folding. GroES binds to the apical surface of the GroEL ring, thereby capping the opening of the GroEL channel. The protein is Co-chaperonin GroES 2 of Rhodopseudomonas palustris (strain ATCC BAA-98 / CGA009).